The chain runs to 252 residues: MPVSRIAVGAPGELSHPDTAKAAVAEFISMLIFVFAGSGSGMAFSKLTDGGGTTPSGLIAASLAHALALFVAVAVGANISGGHVNPAVTFGAFVGGNISLVKAVVYWVAQLLGSVVACLLLKIATGGAAVGAFSLSAGVGAWNAVVFEIVMTFGLVYTVYATAVDPKKGDLGVIAPIAIGFIVGANILAGGAFDGASMNPAVSFGPAVVTGVWDNHWVYWLGPFVGAAIAALIYDIIFIGQRPHDQLPTADY.

2 helical membrane passes run 24 to 44 and 57 to 77; these read VAEFISMLIFVFAGSGSGMAF and GLIAASLAHALALFVAVAVGA. Residues 85 to 87 carry the NPA 1 motif; the sequence is NPA. 3 helical membrane-spanning segments follow: residues 115–137, 144–164, and 173–193; these read VVACLLLKIATGGAAVGAFSLSA, AVVFEIVMTFGLVYTVYATAV, and VIAPIAIGFIVGANILAGGAF. The NPA 2 motif lies at 199 to 201; that stretch reads NPA. Residues 220–240 form a helical membrane-spanning segment; it reads WLGPFVGAAIAALIYDIIFIG.

Belongs to the MIP/aquaporin (TC 1.A.8) family. TIP (TC 1.A.8.10) subfamily. Expressed in leaves.

It localises to the vacuole membrane. Aquaporins facilitate the transport of water and small neutral solutes across cell membranes. May be involved in transport from the vacuolar compartment to the cytoplasm. The sequence is that of Probable aquaporin TIP1-2 (TIP1-2) from Oryza sativa subsp. japonica (Rice).